A 515-amino-acid chain; its full sequence is Protein pid-4 (515 aa).

The disordered stretch occupies residues Asp-496–Asn-515.

In terms of assembly, may interact with pid-2, app-1 and prmt-5.

It is found in the cytoplasm. The protein resides in the perinuclear region. Its subcellular location is the P-body. In terms of biological role, together with pid-5, it is involved in gene silencing mediated by a class of 21 nucleotide PIWI-interacting RNAs (piRNAs) that possess a uracil residue at the 5'-end (also called 21U-RNAs) and guide the Piwi protein prg-1 to its DNA targets for silencing. Together with pid-5, it is required for the biogenesis of secondary and tertiary 22G-siRNAs. Specifically, promotes the production of 22G-siRNAs from the 5' end of target mRNAs. Together with pid-5, plays a role in small RNA-directed transgenerational epigenetic inheritance (also called RNAe) over several generations and germline immortality. Together with pid-5, plays a role in the formation of liquid-like condensates in the cytoplasm called Z granules. This Caenorhabditis elegans protein is Protein pid-4.